We begin with the raw amino-acid sequence, 356 residues long: UDP-N-acetylglucosamine--N-acetylmuramyl-(pentapeptide) pyrophosphoryl-undecaprenol N-acetylglucosamine transferase (356 aa).

UDP-N-acetyl-alpha-D-glucosamine-binding positions include Thr-15–Gly-17, Asn-127, Arg-163, Ser-191, Ile-244, Ala-263–Glu-268, and Gln-288.

This sequence belongs to the glycosyltransferase 28 family. MurG subfamily.

It is found in the cell inner membrane. The catalysed reaction is di-trans,octa-cis-undecaprenyl diphospho-N-acetyl-alpha-D-muramoyl-L-alanyl-D-glutamyl-meso-2,6-diaminopimeloyl-D-alanyl-D-alanine + UDP-N-acetyl-alpha-D-glucosamine = di-trans,octa-cis-undecaprenyl diphospho-[N-acetyl-alpha-D-glucosaminyl-(1-&gt;4)]-N-acetyl-alpha-D-muramoyl-L-alanyl-D-glutamyl-meso-2,6-diaminopimeloyl-D-alanyl-D-alanine + UDP + H(+). The protein operates within cell wall biogenesis; peptidoglycan biosynthesis. Cell wall formation. Catalyzes the transfer of a GlcNAc subunit on undecaprenyl-pyrophosphoryl-MurNAc-pentapeptide (lipid intermediate I) to form undecaprenyl-pyrophosphoryl-MurNAc-(pentapeptide)GlcNAc (lipid intermediate II). In Yersinia pestis bv. Antiqua (strain Antiqua), this protein is UDP-N-acetylglucosamine--N-acetylmuramyl-(pentapeptide) pyrophosphoryl-undecaprenol N-acetylglucosamine transferase.